A 702-amino-acid polypeptide reads, in one-letter code: Pentatricopeptide repeat-containing protein At4g16390, chloroplastic (702 aa).

Residues 1 to 53 constitute a chloroplast transit peptide; that stretch reads MSFHHLCSSPSSLLHDPLPLCNLLSVYPKSTPRSFLSSYNPNSSHFHSRNLLQ. PPR repeat units lie at residues 174 to 208, 209 to 243, 244 to 278, 279 to 313, 314 to 348, 349 to 383, 384 to 414, 420 to 454, and 455 to 489; these read EVIL…GIKP, DNAT…GCEP, DNVT…KWRI, DAVT…GVKP, NLVI…GFTP, NWST…GLSL, TVIL…MKNC, DSWT…GFEP, and TLFV…GITP. Residues 603 to 688 form the Smr domain; sequence LHLKSLSLGA…WFLTTSVAAK (86 aa).

The protein belongs to the PPR family. P subfamily. In terms of tissue distribution, expressed in leaves and flowers and at lower levels in stems and flower buds.

It is found in the plastid. The protein localises to the chloroplast. Its function is as follows. Involved in chloroplast RNA processing. Can bind RNA. Involved in chloroplast development. Involved in chloroplast ribosomal RNA (rRNA) processing and/or translation. Required for FtsH-mediated chloroplast biogenesis. Involved in translation and accumulation of chloroplast ATP synthase subunits. The chain is Pentatricopeptide repeat-containing protein At4g16390, chloroplastic from Arabidopsis thaliana (Mouse-ear cress).